A 794-amino-acid polypeptide reads, in one-letter code: Protein sel-1 homolog 1 (794 aa).

The first 21 residues, 1-21 (MRVRIGLTLLLCAVLLSLASA), serve as a signal peptide directing secretion. Residues 21-50 (ASSDEEGSQDESLDSKTTLTSDESVKDHTT) form a disordered region. Residues 22–737 (SSDEEGSQDE…DMFTQLDMDQ (716 aa)) form an interaction with ERLEC1, OS9 and SYVN1 region. At 22 to 738 (SSDEEGSQDE…MFTQLDMDQL (717 aa)) the chain is on the lumenal side. Positions 23 to 32 (SDEEGSQDES) are enriched in acidic residues. At Ser63 the chain carries Phosphoserine. The segment covering 64 to 77 (EESELESSIQEEED) has biased composition (acidic residues). The interval 64-109 (EESELESSIQEEEDSLKSQEGESVTEDISFLESPNPENKDYEEPKK) is disordered. The Fibronectin type-II domain maps to 122 to 170 (AHGEPCHFPFLFLDKEYDECTSDGREDGRLWCATTYDYKADEKWGFCET). 2 disulfide bridges follow: Cys127–Cys153 and Cys141–Cys168. Sel1-like repeat units lie at residues 183-218 (AEMM…SMNH), 219-254 (TKAL…EEGS), 255-290 (PKGQ…LGGN), 291-326 (LIAH…NHVA), 373-409 (VQAQ…NAGN), 410-446 (SHAM…DMGN), 447-482 (PVGQ…EQGW), 483-518 (VDGQ…QGGH), and 519-554 (ILAF…ERGR). N-linked (GlcNAc...) asparagine glycans are attached at residues Asn195 and Asn217. Asn272 carries an N-linked (GlcNAc...) asparagine glycan. The important for homodimerization and oligomerization stretch occupies residues 352 to 537 (NSGMLEEDLI…MHASGTGVMR (186 aa)). Residue Asn431 is glycosylated (N-linked (GlcNAc...) asparagine). N-linked (GlcNAc...) asparagine glycosylation occurs at Asn608. Sel1-like repeat units lie at residues 627–662 (TVAR…EQQH) and 664–699 (AQAM…EASP). The interval 643–723 (TDVDYETAFI…VVYFLQYIRE (81 aa)) is interaction with SYVN1. The interval 738–794 (LLGPEWDLYLMTIIALLLGTVIAYRQRQHQDMPAPRPPGPRPAPPQQEGPPEQQPPQ) is mediates retention in the endoplasmic reticulum. Residues 739-759 (LGPEWDLYLMTIIALLLGTVI) traverse the membrane as a helical segment. The Cytoplasmic segment spans residues 760–794 (AYRQRQHQDMPAPRPPGPRPAPPQQEGPPEQQPPQ). The tract at residues 766–794 (HQDMPAPRPPGPRPAPPQQEGPPEQQPPQ) is disordered. Over residues 771–794 (APRPPGPRPAPPQQEGPPEQQPPQ) the composition is skewed to pro residues.

The protein belongs to the sel-1 family. In terms of assembly, homodimer and homooligomer. May form a complex with ERLEC1, HSPA5, OS9, and SYVN1. Interacts with FOXRED2 and EDEM1. Interacts with LPL. Interacts with LMF1; may stabilize the complex formed by LPL and LMF1 and thereby promote the export of LPL dimers. Component of the HRD1 complex, which comprises at least SYNV1/HRD1, DERL1/2, FAM8A1, HERPUD1/HERP, OS9, SEL1L and UBE2J1. SYNV1 assembles with SEL1L and FAM8A1 through its transmembrane domains, but interaction with its cytoplasmic domain is required to confer stability to FAM8A1 and enhance recruitment of HERPUD1. The interaction with SYNV1/HRD1 is direct. (Microbial infection) Interacts with human cytomegalovirus protein UL148. Post-translationally, N-glycosylated. Highly expressed in pancreas.

Its subcellular location is the endoplasmic reticulum membrane. Plays a role in the endoplasmic reticulum quality control (ERQC) system also called ER-associated degradation (ERAD) involved in ubiquitin-dependent degradation of misfolded endoplasmic reticulum proteins. Enhances SYVN1 stability. Plays a role in LPL maturation and secretion. Required for normal differentiation of the pancreas epithelium, and for normal exocrine function and survival of pancreatic cells. May play a role in Notch signaling. In Homo sapiens (Human), this protein is Protein sel-1 homolog 1.